The sequence spans 158 residues: Lipoprotein signal peptidase (158 aa).

3 helical membrane passes run 12 to 32, 46 to 66, and 71 to 91; these read LFWW…AWIV, IIPG…FSLF, and IWLR…AILG. Residues D124 and D140 contribute to the active site. Residues 135 to 155 traverse the membrane as a helical segment; that stretch reads VFNVADIAINIGIVCLLWSAW.

Belongs to the peptidase A8 family.

The protein resides in the cell inner membrane. The enzyme catalyses Release of signal peptides from bacterial membrane prolipoproteins. Hydrolyzes -Xaa-Yaa-Zaa-|-(S,diacylglyceryl)Cys-, in which Xaa is hydrophobic (preferably Leu), and Yaa (Ala or Ser) and Zaa (Gly or Ala) have small, neutral side chains.. The protein operates within protein modification; lipoprotein biosynthesis (signal peptide cleavage). Functionally, this protein specifically catalyzes the removal of signal peptides from prolipoproteins. In Thermosynechococcus vestitus (strain NIES-2133 / IAM M-273 / BP-1), this protein is Lipoprotein signal peptidase.